Here is a 707-residue protein sequence, read N- to C-terminus: Trans-feruloyl-CoA synthase FCS1 (707 aa).

ATP-binding positions include His267 and 524–535; that span reads ARAIGYPVVMKA. The ATP-grasp domain occupies 498 to 549; the sequence is KELLRPLGIAFPPSQFAANAEAAAAAARAIGYPVVMKAQAAALGHKSDAGGV.

It in the N-terminal section; belongs to the acetate CoA ligase alpha subunit family. The protein in the C-terminal section; belongs to the acetate CoA ligase beta subunit family. In terms of assembly, homodimer.

The catalysed reaction is (E)-ferulate + ATP + CoA = (E)-feruloyl-CoA + ADP + phosphate. In terms of biological role, catalyzes the formation of feruloyl-CoA, ADP and phosphate from ferulate, CoA and ATP. The protein is Trans-feruloyl-CoA synthase FCS1 of Unknown prokaryotic organism.